A 778-amino-acid chain; its full sequence is DNA repair protein crb2 (778 aa).

Residues 35–56 (KVNASINPSPPRSNDNSNKEFS) are disordered. Thr-73 carries the phosphothreonine; by ATM modification. Position 80 is a phosphoserine; by ATM (Ser-80). An interaction with rad4 region spans residues 141–245 (VSNSSQILSP…PPAFLPETSE (105 aa)). Thr-187 bears the Phosphothreonine mark. Thr-215 carries the phosphothreonine; by cdc2 modification. A Phosphothreonine modification is found at Thr-235. A tudor-like region spans residues 358–493 (SRRSFKNRVL…RRFQGRDLSF (136 aa)). An interaction with dimethylated histone H4 region spans residues 370–404 (FKGYPSFYYPATLVAPVHSAVTSSIMYKVQFDDAT). The region spanning 535 to 653 (SNQLIFDDCV…RVVDFSPYLL (119 aa)) is the BRCT domain.

In terms of assembly, homodimer. Dimerization is mediated via the BRCT domain. Interacts (via BRCT domain) with rad3. Interacts with rad4 (via BRCT1,2 domains); a single rad4 molecule interacts simultaneously with both Thr-187 phosphorylation sites in a crb2 dimer. Interacts (via Tudor domain) with histone H4K20me2. Interacts (via BRCT dmain) with histone H2AS128ph (gamma-H2A). Interacts with chk1. Interacts with sad1. Phosphorylation of Thr-73 and Ser-80 by rad3/ATM promotes interaction with chk1. Phosphorylation at Thr-187 is dependent on phosphorylation at Thr-215 and Thr-235. Phosphorylation at Thr-215 and Thr-235 may prime the non-canonical Thr-187 site for cdc2/CDK phosphorylation.

It localises to the nucleus. Its function is as follows. Essential for cell cycle arrest at the G1 and G2 stages following DNA damage by X-, and UV-irradiation, or inactivation of DNA ligase. Plays a role in the response to DNA damage. Interaction with rad4 via its phosphorylation sites in the N-terminus couples the DNA checkpoint apparatus to chromatin via interaction of its C-terminal BRCT domains with epigenetic modifications on histones H4 and H2A, respectively, in the G1/S phase of the cell cycle, and facilitates recruitment of the checkpoint kinase chk1. This is DNA repair protein crb2 from Schizosaccharomyces pombe (strain 972 / ATCC 24843) (Fission yeast).